Reading from the N-terminus, the 249-residue chain is Type I iodothyronine deiodinase (249 aa).

The Extracellular portion of the chain corresponds to 1–12; sequence MGLPQPGLWLKR. Residues 13 to 33 traverse the membrane as a helical; Signal-anchor for type III membrane protein segment; that stretch reads LWVLLEVAVHVVVGKVLLILF. The Cytoplasmic portion of the chain corresponds to 34–249; it reads PDRVKRNILA…VRAVLEKLHS (216 aa). U126 is an active-site residue. Position 126 (U126) is a non-standard amino acid, selenocysteine.

The protein belongs to the iodothyronine deiodinase family. As to quaternary structure, predominantly monomer. Can form homodimers but homodimerization is not essential for enzyme activity.

It localises to the cell membrane. The protein localises to the endoplasmic reticulum membrane. Its subcellular location is the basolateral cell membrane. The enzyme catalyses 3,3',5-triiodo-L-thyronine + iodide + A + H(+) = L-thyroxine + AH2. It carries out the reaction 3,3',5'-triiodo-L-thyronine + iodide + A + H(+) = L-thyroxine + AH2. It catalyses the reaction 3,3'-diiodo-L-thyronine + iodide + A + H(+) = 3,3',5'-triiodo-L-thyronine + AH2. The catalysed reaction is 3,3'-diiodo-L-thyronine + iodide + A + H(+) = 3,3',5-triiodo-L-thyronine + AH2. The enzyme catalyses 3'-iodo-L-thyronine + iodide + A + H(+) = 3',5'-diiodo-L-thyronine + AH2. It carries out the reaction 3-iodo-L-thyronine + iodide + A + H(+) = 3,5-diiodo-L-thyronine + AH2. It catalyses the reaction 3-iodo-L-thyronine + iodide + A + H(+) = 3,3'-diiodo-L-thyronine + AH2. The catalysed reaction is 3,3'-diiodothyronamine + iodide + A + H(+) = 3,3',5'-triiodothyronamine + AH2. The enzyme catalyses 3'-iodothyronamine + iodide + A + H(+) = 3',5'-diiodothyronamine + AH2. It carries out the reaction 3-iodothyronamine + iodide + A + H(+) = 3,3'-diiodothyronamine + AH2. It catalyses the reaction 3,3'-diiodothyronamine + iodide + A + H(+) = 3,3',5-triiodothyronamine + AH2. The catalysed reaction is 3-iodothyronamine + iodide + A + H(+) = 3,5-diiodothyronamine + AH2. The enzyme catalyses 3,3'-diiodo-L-thyronine sulfate + iodide + A + H(+) = 3,3',5'-triiodo-L-thyronine sulfate + AH2. It carries out the reaction 3,3',5'-triiodo-L-thyronine sulfate + iodide + A + H(+) = L-thyroxine sulfate + AH2. It catalyses the reaction 3,3'-diiodo-L-thyronine sulfate + iodide + A + H(+) = 3,3',5-triiodo-L-thyronine sulfate + AH2. Its activity is regulated as follows. Deiodination of substrates 3,3',5'-triiodothyronine, 3,3',5'-triiodothyronamine and 3',5'- diiodothyronamine are inhibited by 6n-propyl-2-thiouracil (PTU). In terms of biological role, plays a crucial role in the metabolism of thyroid hormones (TH) and has specific roles in TH activation and inactivation by deiodination. Catalyzes the deiodination of L-thyroxine (T4) to 3,5,3'-triiodothyronine (T3), 3,3',5'-triiodothyronine (rT3) to 3,3'-diiodothyronine (3,3'-T2) and 3',5'-diiodothyronine (3',5'-T2) to 3'-monoiodothyronine (3'-T1) via outer-ring deiodination (ORD). Catalyzes the deiodination of T4 to 3,3',5'-triiodothyronine (rT3) via inner-ring deiodination (IRD). Catalyzes the deiodination of T3 to 3,3'-T2, 3,5-diiodothyronine (3,5-T2) to 3- monoiodothyronine (3-T1) and 3,3'-T2 to 3-T1 via IRD. Catalyzes the phenolic ring deiodinations of 3,3',5'-triiodothyronamine and 3',5'-diiodothyronamine. Catalyzes the phenolic ring deiodination of 3,3'-diiodothyronamine and tyrosyl ring deiodinations of 3,5,3'-triiodothyronamine and 3,5-diiodothyronamine. Catalyzes the deiodination of L-thyroxine sulfate and 3,3',5-triiodo-L-thyronine sulfate via IRD and of 3,3',5'-triiodo-L-thyronine sulfate via ORD. This is Type I iodothyronine deiodinase (DIO1) from Homo sapiens (Human).